Consider the following 187-residue polypeptide: UPF0232 protein JTY_0004 (187 aa).

2 stretches are compositionally biased toward basic and acidic residues: residues 1–17 and 24–45; these read MTGS…ERSM and LVRR…DAGR. Disordered regions lie at residues 1–75 and 168–187; these read MTGS…DPQP and PSWR…DTYG.

This sequence belongs to the UPF0232 family.

The chain is UPF0232 protein JTY_0004 from Mycobacterium bovis (strain BCG / Tokyo 172 / ATCC 35737 / TMC 1019).